Reading from the N-terminus, the 128-residue chain is Con-Ins F1 (128 aa).

Residues 1–24 (MTTSSYFLLVTLGLLLYVCRSSFG) form the signal peptide. Intrachain disulfides connect Cys-29–Cys-104, Cys-41–Cys-107, Cys-53–Cys-120, and Cys-106–Cys-111. The propeptide at 59–89 (LQGGTGKKRGRASPLRKRRAFLSMLKARAKR) is c peptide. Residue Glu-115 is modified to 4-carboxyglutamate; partial. The residue at position 127 (Ser-127) is a Serine amide.

The protein belongs to the insulin family. In terms of assembly, heterodimer of A and B chains; disulfide-linked. Expressed by the venom gland.

It is found in the secreted. In terms of biological role, this venom insulin facilitates prey capture by rapidly inducing hypoglycemic shock. Intraperitoneal injection of this peptide into zebrafish lowers blood glucose with the same potency than human insulin. In vivo, when applied to water, this peptide reduces overall locomotor activity of zebrafish larvae, observed as a significant decrease in the percentage of time spent swimming and movement frequency. The chain is Con-Ins F1 from Conus floridulus (Cone snail).